A 217-amino-acid polypeptide reads, in one-letter code: MRLLPKMGGVISIWLTSTLLAMKYLTPLNLAIALLSLLSVNPLMYMKKDFSLVFPILLSALAAYILYLNPTTIYFLLAYSILFIALKFVNEWRIETKIGAFALTFPFPMMALAYGAGLMEILAPLTLLFSLTAFNLFLADSRIYGRVSAKNYLAIIPLALIFYILSHPVLAAAVTAAAIVVTVKANSISVRSFGFSLLFLNLLFVVGFLALDFAGLL.

A run of 6 helical transmembrane segments spans residues 13–35 (IWLT…IALL), 50–68 (FSLV…ILYL), 75–94 (FLLA…EWRI), 109–131 (MMAL…LFSL), 152–174 (YLAI…AAAV), and 194–216 (GFSL…FAGL).

The protein localises to the cell membrane. This is an uncharacterized protein from Archaeoglobus fulgidus (strain ATCC 49558 / DSM 4304 / JCM 9628 / NBRC 100126 / VC-16).